The following is a 159-amino-acid chain: MKILYPGTFDPLTNGHLDLIQRAEKLFGNVVVAVLENTSKKPTFNLNKRLVQIKNAVSHLSNISVISYEGLTVDCAKEVNANLILRGLRAMSDFEYELQIAHTNKSLNTEIETIFLSTNTNYSFLSSSLVKEVAKFGGEIDHMVPDSVERDLKNYFKKD.

T8 contacts substrate. ATP contacts are provided by residues 8 to 9 (TF) and H16. Substrate contacts are provided by K40, T72, and R86. Residues 87-89 (GLR), E97, and 122-128 (YSFLSSS) each bind ATP.

This sequence belongs to the bacterial CoaD family. As to quaternary structure, homohexamer. Requires Mg(2+) as cofactor.

Its subcellular location is the cytoplasm. The catalysed reaction is (R)-4'-phosphopantetheine + ATP + H(+) = 3'-dephospho-CoA + diphosphate. Its pathway is cofactor biosynthesis; coenzyme A biosynthesis; CoA from (R)-pantothenate: step 4/5. Functionally, reversibly transfers an adenylyl group from ATP to 4'-phosphopantetheine, yielding dephospho-CoA (dPCoA) and pyrophosphate. The polypeptide is Phosphopantetheine adenylyltransferase (Prochlorococcus marinus subsp. pastoris (strain CCMP1986 / NIES-2087 / MED4)).